Reading from the N-terminus, the 479-residue chain is U2 small nuclear ribonucleoprotein auxiliary factor 35 kDa subunit-related protein 1 (479 aa).

The disordered stretch occupies residues 1–63 (MAALEKMTFP…EDTFIEEQQL (63 aa)). Residues 20–37 (SHKKYRAALKKEKRKKRR) show a composition bias toward basic residues. Residues 50 to 63 (QEEEEDTFIEEQQL) show a composition bias toward acidic residues. Lys67 participates in a covalent cross-link: Glycyl lysine isopeptide (Lys-Gly) (interchain with G-Cter in SUMO2). A C3H1-type 1 zinc finger spans residues 171–199 (EKDRANCPFYSKTGACRFGDRCSRKHNFP). The RRM domain occupies 203-309 (PTLLIKSMFT…RQLQCEFCPV (107 aa)). The C3H1-type 2 zinc-finger motif lies at 311 to 338 (RWKMAICGLFEIQQCPRGKHCNFLHVFR). Ser354 bears the Phosphoserine mark. The interval 356-479 (DQTGSSFGKN…DRTVQSPQSK (124 aa)) is disordered. Composition is skewed to basic and acidic residues over residues 365-379 (NSER…DHYY) and 388-403 (PSPD…SERK). At Ser389 the chain carries Phosphoserine. Composition is skewed to basic residues over residues 404–417 (KSSH…KRTS) and 442–451 (SQSRRSHRSR).

It localises to the nucleus. The protein is U2 small nuclear ribonucleoprotein auxiliary factor 35 kDa subunit-related protein 1 of Homo sapiens (Human).